A 68-amino-acid polypeptide reads, in one-letter code: DPATCEKEAQFVKQELIGQPYTDAVANALQSNPIRVLHPGDMITMEYIASRLNIQVNENNEIISAHCA.

A disulfide bridge connects residues Cys5 and Cys67.

The protein localises to the secreted. Its function is as follows. Elastase inhibitor. Inhibitor of A.flavus elastase with a Ki of 40 nM. Inhibitor of A.fumigatus elastase and human leukocyte elastase. Inhibits the fibrinogenase and collagenase activities of A.flavus elastase. Does not inhibit porcine pancreatic elastase, trypsin, chymotrypsin, thrombin or A.acutus AC1-proteinase. This chain is Elastase inhibitor AFLEI, found in Aspergillus flavus.